The primary structure comprises 92 residues: Putative septation protein SpoVG (92 aa).

It belongs to the SpoVG family.

Its function is as follows. Could be involved in septation. In Clostridium botulinum (strain Eklund 17B / Type B), this protein is Putative septation protein SpoVG.